Consider the following 199-residue polypeptide: Peptidyl-tRNA hydrolase (199 aa).

Residue Y18 coordinates tRNA. The active-site Proton acceptor is H23. TRNA contacts are provided by Y69, N71, and N117.

This sequence belongs to the PTH family. As to quaternary structure, monomer.

It is found in the cytoplasm. It catalyses the reaction an N-acyl-L-alpha-aminoacyl-tRNA + H2O = an N-acyl-L-amino acid + a tRNA + H(+). Its function is as follows. Hydrolyzes ribosome-free peptidyl-tRNAs (with 1 or more amino acids incorporated), which drop off the ribosome during protein synthesis, or as a result of ribosome stalling. In terms of biological role, catalyzes the release of premature peptidyl moieties from peptidyl-tRNA molecules trapped in stalled 50S ribosomal subunits, and thus maintains levels of free tRNAs and 50S ribosomes. The chain is Peptidyl-tRNA hydrolase from Prochlorococcus marinus (strain MIT 9515).